The chain runs to 206 residues: LexA repressor (206 aa).

A DNA-binding region (H-T-H motif) is located at residues 27–47; it reads YEEIRQNLGFRSLNAVFKHLK. Active-site for autocatalytic cleavage activity residues include S120 and K157.

The protein belongs to the peptidase S24 family. In terms of assembly, homodimer.

It carries out the reaction Hydrolysis of Ala-|-Gly bond in repressor LexA.. Functionally, represses a number of genes involved in the response to DNA damage (SOS response), including recA and lexA. In the presence of single-stranded DNA, RecA interacts with LexA causing an autocatalytic cleavage which disrupts the DNA-binding part of LexA, leading to derepression of the SOS regulon and eventually DNA repair. The protein is LexA repressor of Syntrophobacter fumaroxidans (strain DSM 10017 / MPOB).